Reading from the N-terminus, the 245-residue chain is Carbohydrate deacetylase (245 aa).

Mg(2+)-binding residues include H59 and H125.

It belongs to the YdjC deacetylase family. In terms of assembly, homodimer. Mg(2+) is required as a cofactor.

In terms of biological role, probably catalyzes the deacetylation of acetylated carbohydrates an important step in the degradation of oligosaccharides. The polypeptide is Carbohydrate deacetylase (Listeria welshimeri serovar 6b (strain ATCC 35897 / DSM 20650 / CCUG 15529 / CIP 8149 / NCTC 11857 / SLCC 5334 / V8)).